A 559-amino-acid polypeptide reads, in one-letter code: 3-phosphoinositide-dependent protein kinase 1 (559 aa).

At Tyr9 the chain carries Phosphotyrosine; by SRC and INSR. Ser25 bears the Phosphoserine mark. Residues 25–83 (SPSMVRSQTEPSSSPGIPSGVSRQGSTMDGTTAEARPSTNPLQQHPAQLPPQPRKKRPE) form a disordered region. Residues 35–46 (PSSSPGIPSGVS) show a composition bias toward low complexity. One can recognise a Protein kinase domain in the interval 85–345 (FKFGKILGEG…YGPLKAHPFF (261 aa)). ATP is bound by residues 95 to 97 (SFS) and Lys114. Residues 116–160 (LEKRHIIKENKVPYVTRERDVMSRLDHPFFVKLYFTFQDDEKLYF) form a PIF-pocket region. ATP contacts are provided by residues 163–165 (SYA) and Glu169. The Proton acceptor role is filled by Asp208. The ATP site is built by Glu212 and Asp226. Ser244 is subject to Phosphoserine. Lys307 is subject to N6-acetyllysine. The residue at position 357 (Thr357) is a Phosphothreonine; by MELK. Residues Tyr376 and Tyr379 each carry the phosphotyrosine; by SRC and INSR modification. A Phosphoserine modification is found at Ser396. The residue at position 397 (Ser397) is a Phosphoserine; by MAP3K5. Ser399 carries the post-translational modification Phosphoserine. Phosphoserine; by MAP3K5 is present on Ser401. Ser413 carries the post-translational modification Phosphoserine. In terms of domain architecture, PH spans 462-553 (KMGPVDKRKG…EVWRQQYQSS (92 aa)). A Phosphoserine; by PKC/PRKCQ modification is found at Ser504. Residue Thr516 is modified to Phosphothreonine; by autocatalysis. Ser532 carries the post-translational modification Phosphoserine; by PKC/PRKCQ.

The protein belongs to the protein kinase superfamily. AGC Ser/Thr protein kinase family. PDPK1 subfamily. Homodimer in its autoinhibited state. Active as monomer. Interacts with NPRL2, PPARG, PAK1, PTK2B, GRB14, PKN1 (via C-terminus), STRAP and IKKB. The Tyr-9 phosphorylated form interacts with SRC, RASA1 and CRK (via their SH2 domains). Interacts with SGK3 in a phosphorylation-dependent manner. The tyrosine-phosphorylated form interacts with PTPN6. The Ser-244 phosphorylated form interacts with YWHAH and YWHAQ. Binds INSR in response to insulin. Interacts (via PH domain) with SMAD3, SMAD4 and SMAD7. Interacts with PKN2; the interaction stimulates PDPK1 autophosphorylation, its PI(3,4,5)P3-dependent kinase activity toward 'Ser-473' of AKT1 but also activates its kinase activity toward PRKCD and PRKCZ. Phosphorylation on Ser-244 in the activation loop is required for full activity. PDPK1 itself can autophosphorylate Ser-244, leading to its own activation. Autophosphorylation is inhibited by the apoptotic C-terminus cleavage product of PKN2. Tyr-9 phosphorylation is critical for stabilization of both PDPK1 and the PDPK1/SRC complex via HSP90-mediated protection of PDPK1 degradation. Angiotensin II stimulates the tyrosine phosphorylation of PDPK1 in vascular smooth muscle in a calcium- and SRC-dependent manner. Phosphorylated on Tyr-9, Tyr-376 and Tyr-379 by INSR in response to insulin. Palmitate negatively regulates autophosphorylation at Ser-244 and palmitate-induced phosphorylation at Ser-532 and Ser-504 by PKC/PRKCQ negatively regulates its ability to phosphorylate PKB/AKT1. Phosphorylation at Thr-357 by MELK partially inhibits kinase activity, the inhibition is cooperatively enhanced by phosphorylation at Ser-397 and Ser-401 by MAP3K5. Post-translationally, monoubiquitinated in the kinase domain, deubiquitinated by USP4.

It is found in the cytoplasm. The protein resides in the nucleus. The protein localises to the cell membrane. It localises to the cell junction. Its subcellular location is the focal adhesion. It carries out the reaction L-seryl-[protein] + ATP = O-phospho-L-seryl-[protein] + ADP + H(+). The enzyme catalyses L-threonyl-[protein] + ATP = O-phospho-L-threonyl-[protein] + ADP + H(+). With respect to regulation, homodimerization regulates its activity by maintaining the kinase in an autoinhibitory conformation. NPRL2 down-regulates its activity by interfering with tyrosine phosphorylation at the Tyr-9, Tyr-376 and Tyr-379 residues. The 14-3-3 protein YWHAQ acts as a negative regulator by association with the residues surrounding the Ser-244 residue. STRAP positively regulates its activity by enhancing its autophosphorylation and by stimulating its dissociation from YWHAQ. SMAD2, SMAD3, SMAD4 and SMAD7 also positively regulate its activity by stimulating its dissociation from YWHAQ. Activated by phosphorylation on Tyr-9, Tyr-376 and Tyr-379 by INSR in response to insulin. Serine/threonine kinase which acts as a master kinase, phosphorylating and activating a subgroup of the AGC family of protein kinases. Its targets include: protein kinase B (PKB/AKT1, PKB/AKT2, PKB/AKT3), p70 ribosomal protein S6 kinase (RPS6KB1), p90 ribosomal protein S6 kinase (RPS6KA1, RPS6KA2 and RPS6KA3), cyclic AMP-dependent protein kinase (PRKACA), protein kinase C (PRKCD and PRKCZ), serum and glucocorticoid-inducible kinase (SGK1, SGK2 and SGK3), p21-activated kinase-1 (PAK1), TSSK3, protein kinase PKN (PKN1 and PKN2). Plays a central role in the transduction of signals from insulin by providing the activating phosphorylation to PKB/AKT1, thus propagating the signal to downstream targets controlling cell proliferation and survival, as well as glucose and amino acid uptake and storage. Negatively regulates the TGF-beta-induced signaling by: modulating the association of SMAD3 and SMAD7 with TGF-beta receptor, phosphorylating SMAD2, SMAD3, SMAD4 and SMAD7, preventing the nuclear translocation of SMAD3 and SMAD4 and the translocation of SMAD7 from the nucleus to the cytoplasm in response to TGF-beta. Activates PPARG transcriptional activity and promotes adipocyte differentiation. Activates the NF-kappa-B pathway via phosphorylation of IKKB. The tyrosine phosphorylated form is crucial for the regulation of focal adhesions by angiotensin II. Controls proliferation, survival, and growth of developing pancreatic cells. Participates in the regulation of Ca(2+) entry and Ca(2+)-activated K(+) channels of mast cells. Essential for the motility of vascular endothelial cells (ECs) and is involved in the regulation of their chemotaxis. Plays a critical role in cardiac homeostasis by serving as a dual effector for cell survival and beta-adrenergic response. Plays an important role during thymocyte development by regulating the expression of key nutrient receptors on the surface of pre-T cells and mediating Notch-induced cell growth and proliferative responses. Provides negative feedback inhibition to toll-like receptor-mediated NF-kappa-B activation in macrophages. In Rattus norvegicus (Rat), this protein is 3-phosphoinositide-dependent protein kinase 1 (Pdpk1).